Here is a 463-residue protein sequence, read N- to C-terminus: Bifunctional protein HldE (463 aa).

Positions 1–315 are ribokinase; the sequence is MRKILVIGDL…LILNQTHPKI (315 aa). 191–194 contributes to the ATP binding site; the sequence is NRFE. Aspartate 260 is a catalytic residue. Residues 334–463 form a cytidylyltransferase region; sequence FTNGCFDILH…IEKIKRAYND (130 aa).

The protein in the N-terminal section; belongs to the carbohydrate kinase PfkB family. It in the C-terminal section; belongs to the cytidylyltransferase family. Homodimer.

The enzyme catalyses D-glycero-beta-D-manno-heptose 7-phosphate + ATP = D-glycero-beta-D-manno-heptose 1,7-bisphosphate + ADP + H(+). The catalysed reaction is D-glycero-beta-D-manno-heptose 1-phosphate + ATP + H(+) = ADP-D-glycero-beta-D-manno-heptose + diphosphate. The protein operates within nucleotide-sugar biosynthesis; ADP-L-glycero-beta-D-manno-heptose biosynthesis; ADP-L-glycero-beta-D-manno-heptose from D-glycero-beta-D-manno-heptose 7-phosphate: step 1/4. It functions in the pathway nucleotide-sugar biosynthesis; ADP-L-glycero-beta-D-manno-heptose biosynthesis; ADP-L-glycero-beta-D-manno-heptose from D-glycero-beta-D-manno-heptose 7-phosphate: step 3/4. In terms of biological role, catalyzes the phosphorylation of D-glycero-D-manno-heptose 7-phosphate at the C-1 position to selectively form D-glycero-beta-D-manno-heptose-1,7-bisphosphate. Functionally, catalyzes the ADP transfer from ATP to D-glycero-beta-D-manno-heptose 1-phosphate, yielding ADP-D-glycero-beta-D-manno-heptose. In Helicobacter acinonychis (strain Sheeba), this protein is Bifunctional protein HldE.